Here is a 201-residue protein sequence, read N- to C-terminus: Large ribosomal subunit protein uL4 (201 aa).

Residues 45 to 67 are disordered; it reads AQKTRAEVTGSGKKPWRQKGTGR.

This sequence belongs to the universal ribosomal protein uL4 family. As to quaternary structure, part of the 50S ribosomal subunit.

One of the primary rRNA binding proteins, this protein initially binds near the 5'-end of the 23S rRNA. It is important during the early stages of 50S assembly. It makes multiple contacts with different domains of the 23S rRNA in the assembled 50S subunit and ribosome. Functionally, forms part of the polypeptide exit tunnel. This chain is Large ribosomal subunit protein uL4, found in Yersinia enterocolitica serotype O:8 / biotype 1B (strain NCTC 13174 / 8081).